The following is a 395-amino-acid chain: Mitogen-activated protein kinase 6 (395 aa).

The tract at residues 1 to 35 (MDGGSGQPAADTEMTEAPGGFPAAAPSPQMPGIEN) is disordered. Low complexity predominate over residues 17-27 (APGGFPAAAPS). One can recognise a Protein kinase domain in the interval 63–348 (KPPIMPIGKG…VLDALAHPYL (286 aa)). ATP is bound by residues 69–77 (IGKGAYGIV) and Lys92. Catalysis depends on Asp189, which acts as the Proton acceptor. Thr221 is modified (phosphothreonine). Residues 221–223 (TEY) carry the TXY motif. Phosphotyrosine is present on Tyr223. At Thr226 the chain carries Phosphothreonine.

It belongs to the protein kinase superfamily. CMGC Ser/Thr protein kinase family. MAP kinase subfamily. In terms of assembly, interacts with MEKK1, MKK1 and MKK2. May form a ternary complex with MEKK1 and MKK1 or MKK2. Interacts with NDPK2, AP2C1, MKP1 and PTP1. Interacts with DSPTP1B/MKP2, especially during HR-like responses triggered by fungal elicitors. Interacts with MKK4, MKK5 and MKK6. Binds to LIP5. Interacts with VQ4 and IKU1/VQ14. Interacts with RACK1A, RACK1B and RACK1C. Interacts with PTP1. Interacts with FLZ9. Binds to BASL and YDA. Dually phosphorylated on Thr-221 and Tyr-223, which activates the enzyme. Dephosphorylated by DSPTP1B/MKP2.

Its subcellular location is the cytoplasm. The protein localises to the nucleus. The protein resides in the cell cortex. The catalysed reaction is L-seryl-[protein] + ATP = O-phospho-L-seryl-[protein] + ADP + H(+). It catalyses the reaction L-threonyl-[protein] + ATP = O-phospho-L-threonyl-[protein] + ADP + H(+). With respect to regulation, activated by threonine and tyrosine phosphorylation. Activated by the MAP kinase kinases MKK2, MKK3, MKK4, MKK5, MKK7 and MKK9. Activated in response to touch, wounding, low temperature, low humidity, salt stress, hydrogen peroxide, ozone, ACC (an ethylene precursor), jasmonic acid (JA), mastoparan and UVC. Activated in response to elicitors: oligogalacturonides, hexameric chitin fragments, fungal xylanase, and the bacterial flagellin and harpin. Activated upon Pseudomonas syringae pv. tomato DC3000 infection. Repressed by the protein phosphatase 2C AP2C1 and the protein-tyrosine-phosphatases MKP1 and PTP1. Repressed by DSPTP1B/MKP2-mediated dephosphorylation. Activated by polarized BASL. Triggered by MKKK20 in response to various abiotic stresses, including osmotic stress, cold and reactive oxygen species (ROS). Activated by MKK5 in response to abscisic acid (ABA). Mitogen-activated protein kinase (MAPK) which regulates abscisic acid (ABA) responses in a MAPKKK20-MKK5-MPK6 cascade involved in root growth (e.g. root cell division and elongation) and stomatal response. Involved in oxidative stress-mediated signaling cascade (such as ozone). Involved in the innate immune MAP kinase signaling cascade (MEKK1, MKK4/MKK5 and MPK3/MPK6) downstream of bacterial flagellin receptor FLS2. May be involved in hypersensitive response (HR)-mediated signaling cascade by modulating LIP5 phosphorylation and subsequent multivesicular bodies (MVBs) trafficking. May phosphorylate regulators of WRKY transcription factors. Phosphorylates 1-aminocyclopropane-1-carboxylic acid synthases (ACS2 and ACS6) and may be involved in the regulation of bacterial elicitor flagellin-induced ethylene production. Regulates locally gene-mediated and basal resistance response to certain pathogens. May be involved in the cold and salinity stress-mediated MAP kinase signaling cascade (MEKK1, MKK1/MKK2 and MPK4/MPK6). MKK1-MPK6 module mediates abscisic acid (ABA)-dependent CAT1 expression with H(2)O(2) production and response to drought and salt stress. MKK1-MPK6 module is also involved in sugar signaling during the process of seed germination. MKK3-MPK6 module plays an important role in the jasmonate signal transduction pathway through the negative regulation of MYC2/JIN1 expression. MKK9-MPK3/MPK6 module phosphorylates and activates EIN3, leading to the promotion of EIN3-mediated transcription in ethylene signaling. MPK3/MPK6 cascade regulates camalexin synthesis through transcriptional regulation of the biosynthetic genes after pathogen infection. MKK9-MPK6 module positively regulates leaf senescence. YDA-MKK4/MKK5-MPK3/MPK6 module regulates stomatal cell fate before the guard mother cell (GMC) is specified. When activated, reinforces the feedback loop by phosphorylating BASL, and inhibits stomatal fate by phosphorylating SPCH. This MAPK cascade also functions downstream of the ER receptor in regulating coordinated local cell proliferation, which shapes the morphology of plant organs. This chain is Mitogen-activated protein kinase 6, found in Arabidopsis thaliana (Mouse-ear cress).